We begin with the raw amino-acid sequence, 122 residues long: Copper metallothionein 1 (122 aa).

Residues 1-35 are cys-rich copper-binding 1; that stretch reads MACNCPPQKNTACCSTSEAQDKCTCQKGNCECKAC. The interval 36-50 is spacer B1; it reads PNSTKTSESGGKAST. Residues 51–72 are cys-rich copper-binding 2; that stretch reads CNCGGSGEACTCPPGQCACDKC. Residues 73 to 81 are spacer B2; it reads PKKAKSVST. Positions 82-103 are cys-rich copper-binding 3; sequence CGCGGSGAACSCPPGKCACDNC. A spacer B3 region spans residues 104–113; sequence PKQAQEKVSS. The tract at residues 114–122 is cys-rich copper-binding 4; it reads CACSGSGAA.

This sequence belongs to the metallothionein superfamily.

It localises to the cytoplasm. Its subcellular location is the cell cortex. In terms of biological role, copper metallothionein that protects the cell against copper toxicity by tightly chelating copper ions. Required for antioxidant-mediated growth rescue in the presence of fluconazole. Acts as a critical factors for lung colonization and virulence. The sequence is that of Copper metallothionein 1 from Cryptococcus neoformans var. grubii serotype A (strain H99 / ATCC 208821 / CBS 10515 / FGSC 9487) (Filobasidiella neoformans var. grubii).